We begin with the raw amino-acid sequence, 100 residues long: Nucleoid-associated protein RoseRS_1534 (100 aa).

The protein belongs to the YbaB/EbfC family. Homodimer.

It is found in the cytoplasm. It localises to the nucleoid. In terms of biological role, binds to DNA and alters its conformation. May be involved in regulation of gene expression, nucleoid organization and DNA protection. The protein is Nucleoid-associated protein RoseRS_1534 of Roseiflexus sp. (strain RS-1).